The sequence spans 93 residues: Small ribosomal subunit protein uS19 (93 aa).

This sequence belongs to the universal ribosomal protein uS19 family.

Its function is as follows. Protein S19 forms a complex with S13 that binds strongly to the 16S ribosomal RNA. This chain is Small ribosomal subunit protein uS19, found in Caldanaerobacter subterraneus subsp. tengcongensis (strain DSM 15242 / JCM 11007 / NBRC 100824 / MB4) (Thermoanaerobacter tengcongensis).